Consider the following 367-residue polypeptide: Peptide chain release factor 2 (367 aa).

Residue Gln254 is modified to N5-methylglutamine.

This sequence belongs to the prokaryotic/mitochondrial release factor family. Methylated by PrmC. Methylation increases the termination efficiency of RF2.

Its subcellular location is the cytoplasm. In terms of biological role, peptide chain release factor 2 directs the termination of translation in response to the peptide chain termination codons UGA and UAA. This Leptospira interrogans serogroup Icterohaemorrhagiae serovar copenhageni (strain Fiocruz L1-130) protein is Peptide chain release factor 2.